The chain runs to 150 residues: Large ribosomal subunit protein uL13 (150 aa).

It belongs to the universal ribosomal protein uL13 family. Part of the 50S ribosomal subunit.

Functionally, this protein is one of the early assembly proteins of the 50S ribosomal subunit, although it is not seen to bind rRNA by itself. It is important during the early stages of 50S assembly. This Chlamydia muridarum (strain MoPn / Nigg) protein is Large ribosomal subunit protein uL13.